The primary structure comprises 372 residues: Transaldolase 2 (372 aa).

Catalysis depends on Lys140, which acts as the Schiff-base intermediate with substrate.

This sequence belongs to the transaldolase family. Type 2 subfamily.

Its subcellular location is the cytoplasm. It carries out the reaction D-sedoheptulose 7-phosphate + D-glyceraldehyde 3-phosphate = D-erythrose 4-phosphate + beta-D-fructose 6-phosphate. The protein operates within carbohydrate degradation; pentose phosphate pathway; D-glyceraldehyde 3-phosphate and beta-D-fructose 6-phosphate from D-ribose 5-phosphate and D-xylulose 5-phosphate (non-oxidative stage): step 2/3. In terms of biological role, transaldolase is important for the balance of metabolites in the pentose-phosphate pathway. The chain is Transaldolase 2 from Streptomyces avermitilis (strain ATCC 31267 / DSM 46492 / JCM 5070 / NBRC 14893 / NCIMB 12804 / NRRL 8165 / MA-4680).